Reading from the N-terminus, the 489-residue chain is Phosphoenolpyruvate carboxykinase (ATP) (489 aa).

Residues arginine 53 and tyrosine 159 each coordinate substrate. Residues histidine 185, 208 to 216 (GLSGTGKTT), aspartate 258, arginine 300, 409 to 410 (KI), and serine 415 contribute to the ATP site. Residue arginine 300 participates in substrate binding.

Belongs to the phosphoenolpyruvate carboxykinase (ATP) family.

It localises to the cytoplasm. The catalysed reaction is oxaloacetate + ATP = phosphoenolpyruvate + ADP + CO2. It participates in carbohydrate biosynthesis; gluconeogenesis. In terms of biological role, involved in the gluconeogenesis. Catalyzes the conversion of oxaloacetate (OAA) to phosphoenolpyruvate (PEP) through direct phosphoryl transfer between the nucleoside triphosphate and OAA. The sequence is that of Phosphoenolpyruvate carboxykinase (ATP) from Aeropyrum pernix (strain ATCC 700893 / DSM 11879 / JCM 9820 / NBRC 100138 / K1).